An 846-amino-acid polypeptide reads, in one-letter code: Vacuolar-sorting protein BRO1 (846 aa).

Residues 5-403 form the BRO1 domain; sequence SLSNLMLAIH…ERLQQASELT (399 aa). The stretch at 565–592 forms a coiled coil; it reads LKQSLRQLENLGAQRAGLEDMLKEMKRK. Positions 726-846 are disordered; the sequence is SFQDHRSSGP…PHQGGGYYRQ (121 aa). 2 stretches are compositionally biased toward low complexity: residues 763-780 and 790-823; these read APYY…YSIP and TPHG…QGQQ. Residues 824–836 are compositionally biased toward pro residues; sequence PRPPYPGQSPYQP.

As to quaternary structure, homodimer. Interacts with AMSH3. Interacts with VPS32.1/SNF7B and VPS32.2/SNF7A. Interacts with ELC/VPS23A.

It is found in the cytoplasm. Its subcellular location is the late endosome. The protein localises to the endosome. It localises to the multivesicular body. In terms of biological role, class E VPS protein involved in concentration and sorting of cargo proteins of the multivesicular body (MVB) for incorporation into intralumenal vesicles. Fusion between endosomes and the vacuole will then target the cargo proteins to the vacuolar lumen. Associates with FREE1 and ELC to perform function in the ESCRT-I complex. Binds ubiquitin in vitro. Plays a role in the biogenesis of vacuole and multivesicular bodies (MVBs). Required for the endosomal location of AMSH3. Mediates high-affinity phosphate transporter trafficking to maintain phosphate homeostasis. Regulates vacuolar degradation of PHT1-1. This chain is Vacuolar-sorting protein BRO1, found in Arabidopsis thaliana (Mouse-ear cress).